The primary structure comprises 549 residues: MKRVLTALAAALPFAAHAADAISGAVERQPTNWQAIIMFLIFVVFTLGITYWASKRVRSRSDYYTAGGNITGFQNGLAIAGDYMSAASFLGISALVFTSGYDGLIYSLGFLVGWPIILFLIAERLRNLGRYTFADVASYRLKQGPIRILSACGSLVVVALYLIAQMVGAGKLIELLFGLNYHIAVVLVGVLMMMYVLFGGMLATTWVQIIKAVLLLFGASFMAFMVMKHVGFSFNNLFTEAMAVHPKGTAIMSPGGLVQDPISALSLGLGLIFGTAGLPHILMRFFTVSDAREARKSVFYATGFMGYFYILTFIIGFGAIMLVGANPAYKDAAGALIGGNNMAAVHLANAVGGNLFLGFISAVAFATILAVVAGLTLAGASAVSHDLYANVFRKGATEREELKVSKITVLVLDVIAIILGVLFENQNIAFMVGLAFAIAASCNFPIILLSMYWSKLTTRGAMLGGWLGLLTAVVLMILGPTIWVQILGHEKAIFPYEYPALFSISVAFLGIWFFSATDNSAEGNREREQFRAQFIRSQTGFGVQQGRAH.

At 1–32 (MKRVLTALAAALPFAAHAADAISGAVERQPTN) the chain is on the periplasmic side. The chain crosses the membrane as a helical span at residues 33–55 (WQAIIMFLIFVVFTLGITYWASK). Topologically, residues 56–75 (RVRSRSDYYTAGGNITGFQN) are cytoplasmic. Residues 76-98 (GLAIAGDYMSAASFLGISALVFT) traverse the membrane as a helical segment. Residues 99–102 (SGYD) are Periplasmic-facing. A helical membrane pass occupies residues 103–125 (GLIYSLGFLVGWPIILFLIAERL). The Cytoplasmic segment spans residues 126 to 145 (RNLGRYTFADVASYRLKQGP). The helical transmembrane segment at 146–168 (IRILSACGSLVVVALYLIAQMVG) threads the bilayer. At 169 to 182 (AGKLIELLFGLNYH) the chain is on the periplasmic side. Residues 183 to 205 (IAVVLVGVLMMMYVLFGGMLATT) form a helical membrane-spanning segment. Over 206 to 211 (WVQIIK) the chain is Cytoplasmic. A helical transmembrane segment spans residues 212-234 (AVLLLFGASFMAFMVMKHVGFSF). Topologically, residues 235-260 (NNLFTEAMAVHPKGTAIMSPGGLVQD) are periplasmic. A helical transmembrane segment spans residues 261–283 (PISALSLGLGLIFGTAGLPHILM). Topologically, residues 284-302 (RFFTVSDAREARKSVFYAT) are cytoplasmic. Residues 303–325 (GFMGYFYILTFIIGFGAIMLVGA) form a helical membrane-spanning segment. Topologically, residues 326–361 (NPAYKDAAGALIGGNNMAAVHLANAVGGNLFLGFIS) are periplasmic. Residues 362–384 (AVAFATILAVVAGLTLAGASAVS) traverse the membrane as a helical segment. Residues 385 to 403 (HDLYANVFRKGATEREELK) lie on the Cytoplasmic side of the membrane. A helical membrane pass occupies residues 404–423 (VSKITVLVLDVIAIILGVLF). At 424 to 427 (ENQN) the chain is on the periplasmic side. A helical transmembrane segment spans residues 428 to 450 (IAFMVGLAFAIAASCNFPIILLS). At 451–461 (MYWSKLTTRGA) the chain is on the cytoplasmic side. The helical transmembrane segment at 462 to 484 (MLGGWLGLLTAVVLMILGPTIWV) threads the bilayer. Over 485–493 (QILGHEKAI) the chain is Periplasmic. The chain crosses the membrane as a helical span at residues 494–516 (FPYEYPALFSISVAFLGIWFFSA). The Cytoplasmic portion of the chain corresponds to 517–549 (TDNSAEGNREREQFRAQFIRSQTGFGVQQGRAH).

Belongs to the sodium:solute symporter (SSF) (TC 2.A.21) family.

The protein localises to the cell inner membrane. Functionally, transports acetate. This Salmonella typhi protein is Cation/acetate symporter ActP (actP).